The following is a 951-amino-acid chain: Zinc fingers and homeoboxes protein 3 (951 aa).

Positions 1-66 (MASKRKSTTP…SSTDGSALAN (66 aa)) are disordered. The segment covering 42–58 (PSEAPEASSEAAPNPSS) has biased composition (low complexity). C2H2-type zinc fingers lie at residues 77 to 100 (YSCK…TSEH) and 109 to 132 (FVCT…AKCH). The interval 198-249 (KENAPTQPGGEALPKPLAGETEGKEGDHTFINGATPVSQASANSTKPPHTAN) is disordered. The span at 232–244 (TPVSQASANSTKP) shows a compositional bias: polar residues. Residues 237-481 (ASANSTKPPH…LLTACPSITS (245 aa)) are required for homodimerization and interaction with NFYA. The interval 297 to 495 (LSSIPTYNAA…DANIYKNKKS (199 aa)) is required for repressor activity. 2 consecutive DNA-binding regions (homeobox) follow at residues 298 to 357 (SSIP…GISW) and 487 to 546 (ANIY…RNLK). Residues 490-548 (YKNKKSHEQLSALKGSFCRNQFPGQSEVEHLTKVTGLSTREVRKWFSDRRYHCRNLKGT) are required for nuclear localization. Position 597 is a phosphoserine (serine 597). The homeobox 3 DNA-binding region spans 605–664 (TPTKYKERAPEQLRVLESSFAQNPLPPEEELDRLRSETKMTRREIDGWFSERRKRVNAEE). 2 disordered regions span residues 621 to 642 (ESSF…RSET) and 661 to 702 (NAEE…NGSS). Residues 661 to 674 (NAEETKKADGHAPQ) are compositionally biased toward basic and acidic residues. Residues 675–690 (EEAEGAEEEGRDEELA) are compositionally biased toward acidic residues. Serine 701 and serine 716 each carry phosphoserine. DNA-binding regions (homeobox) lie at residues 759–818 (PSRV…KNGQ) and 830–889 (FPPG…TRAV). The interval 885–951 (ETRAVADTSS…PQSGRQLETD (67 aa)) is disordered. 2 positions are modified to phosphoserine: serine 922 and serine 941. Polar residues predominate over residues 937 to 951 (FDTSSPQSGRQLETD).

It belongs to the ZHX family. Homodimer (via homeobox domain 1). Heterodimer with ZHX1 (via homeobox domain 1). Heterodimer with ZHX2 (via homeobox domain 1). Heterodimerization with ZHX1 is a prerequisite for repressor activity. Interacts with NFYA. Widely expressed.

It is found in the cytoplasm. The protein localises to the nucleus. Functionally, acts as a transcriptional repressor. Involved in the early stages of mesenchymal stem cell (MSC) osteogenic differentiation. Is a regulator of podocyte gene expression during primary glomerula disease. Binds to promoter DNA. The polypeptide is Zinc fingers and homeoboxes protein 3 (Zhx3) (Rattus norvegicus (Rat)).